A 637-amino-acid chain; its full sequence is 1-deoxy-D-xylulose-5-phosphate synthase (637 aa).

Thiamine diphosphate is bound by residues histidine 82 and glycine 123–alanine 125. Aspartate 154 serves as a coordination point for Mg(2+). Thiamine diphosphate contacts are provided by residues glycine 155–serine 156, asparagine 183, tyrosine 295, and glutamate 378. Residue asparagine 183 participates in Mg(2+) binding.

The protein belongs to the transketolase family. DXPS subfamily. Homodimer. The cofactor is Mg(2+). It depends on thiamine diphosphate as a cofactor.

It catalyses the reaction D-glyceraldehyde 3-phosphate + pyruvate + H(+) = 1-deoxy-D-xylulose 5-phosphate + CO2. Its pathway is metabolic intermediate biosynthesis; 1-deoxy-D-xylulose 5-phosphate biosynthesis; 1-deoxy-D-xylulose 5-phosphate from D-glyceraldehyde 3-phosphate and pyruvate: step 1/1. In terms of biological role, catalyzes the acyloin condensation reaction between C atoms 2 and 3 of pyruvate and glyceraldehyde 3-phosphate to yield 1-deoxy-D-xylulose-5-phosphate (DXP). This is 1-deoxy-D-xylulose-5-phosphate synthase from Lawsonia intracellularis (strain PHE/MN1-00).